The chain runs to 237 residues: Phosphoribosylaminoimidazole-succinocarboxamide synthase (237 aa).

Belongs to the SAICAR synthetase family.

It carries out the reaction 5-amino-1-(5-phospho-D-ribosyl)imidazole-4-carboxylate + L-aspartate + ATP = (2S)-2-[5-amino-1-(5-phospho-beta-D-ribosyl)imidazole-4-carboxamido]succinate + ADP + phosphate + 2 H(+). Its pathway is purine metabolism; IMP biosynthesis via de novo pathway; 5-amino-1-(5-phospho-D-ribosyl)imidazole-4-carboxamide from 5-amino-1-(5-phospho-D-ribosyl)imidazole-4-carboxylate: step 1/2. This Oceanobacillus iheyensis (strain DSM 14371 / CIP 107618 / JCM 11309 / KCTC 3954 / HTE831) protein is Phosphoribosylaminoimidazole-succinocarboxamide synthase.